The chain runs to 264 residues: MKPTTIASLQKCKQDKKRFATITAYDYSFAKLFAEEGLNVMLVGDSLGMTVQGHDSTLPVTVADIAYHTAAVRRGAPNCLLLADLPFMAYATPEQAFENAATVMRAGANMVKIEGGEWLVETVQMLTERAVPVCGHLGLTPQSVNIFGGYKVQGRGDEAGDQLLSDALALEAAGAQLLVLECVPVELAKRITEALAIPVIGIGAGNVTDGQILVMHDAFGITGGHIPKFAKNFLAETGDIRAAVRQYMAEVESGVYPGEEHSFH.

The Mg(2+) site is built by Asp45 and Asp84. 3-methyl-2-oxobutanoate is bound by residues 45-46 (DS), Asp84, and Lys112. A Mg(2+)-binding site is contributed by Glu114. Glu181 acts as the Proton acceptor in catalysis.

It belongs to the PanB family. Homodecamer; pentamer of dimers. It depends on Mg(2+) as a cofactor.

It is found in the cytoplasm. It carries out the reaction 3-methyl-2-oxobutanoate + (6R)-5,10-methylene-5,6,7,8-tetrahydrofolate + H2O = 2-dehydropantoate + (6S)-5,6,7,8-tetrahydrofolate. The protein operates within cofactor biosynthesis; (R)-pantothenate biosynthesis; (R)-pantoate from 3-methyl-2-oxobutanoate: step 1/2. Its function is as follows. Catalyzes the reversible reaction in which hydroxymethyl group from 5,10-methylenetetrahydrofolate is transferred onto alpha-ketoisovalerate to form ketopantoate. The chain is 3-methyl-2-oxobutanoate hydroxymethyltransferase from Escherichia coli O7:K1 (strain IAI39 / ExPEC).